The primary structure comprises 396 residues: MTMSMYSTTDKMKMSAPSCFPGRYSPSYRSSEQMRRCMPNPSIHISSSCDSLESRLLEDASLLCNSWSARQNGDIFAGINDGILSRAEALAAVDIQKHQAQHVHSQMPSQIKHDVMYHHHSMSGPPQRPLQENPFSRQMHHSMDQLDMLDPTGSMTTLAPISESPLTPTHQHLHGSYHSMNHMMSHHHPGTLSGHTGGHHGHSAVHHPVITAAVAAAGLHPDTDTDPRELEAFAERFKQRRIKLGVTQADVGKALANLKLPGVGALSQSTICRFESLTLSHNNMIALKPILQAWLEEAEAQAKNKRRDPDAPSVLPAGEKKRKRTSIAAPEKRSLEAYFAVQPRPSGEKIAAIAEKLDLKKNVVRVWFCNQRQKQKRIVSSVTPSMTGHGSAGFGY.

Positions 86–95 match the POU-IV box motif; sequence RAEALAAVDI. The region spanning 222–299 is the POU-specific domain; sequence DTDTDPRELE…ILQAWLEEAE (78 aa). Residues 302 to 328 are disordered; it reads AKNKRRDPDAPSVLPAGEKKRKRTSIA. A DNA-binding region (homeobox; atypical) is located at residues 320-377; sequence KKRKRTSIAAPEKRSLEAYFAVQPRPSGEKIAAIAEKLDLKKNVVRVWFCNQRQKQKR.

Belongs to the POU transcription factor family. Class-4 subfamily. Coexpressed with vvl in overlapping subsets of neurons in the embryonic central nervous system. Expressed in olfactory neurons.

It localises to the nucleus. Its function is as follows. Modulates gene transcription; simultaneously generates both a specific activator and an inhibitor of gene transcription, capable of modulating two distinct regulatory programs during neural development. Has a role in olfactory behavior. The chain is Inhibitory POU protein (acj6) from Drosophila melanogaster (Fruit fly).